We begin with the raw amino-acid sequence, 226 residues long: Large ribosomal subunit protein uL1 (226 aa).

The protein belongs to the universal ribosomal protein uL1 family. Part of the 50S ribosomal subunit.

Functionally, binds directly to 23S rRNA. The L1 stalk is quite mobile in the ribosome, and is involved in E site tRNA release. In terms of biological role, protein L1 is also a translational repressor protein, it controls the translation of the L11 operon by binding to its mRNA. This is Large ribosomal subunit protein uL1 from Borrelia garinii subsp. bavariensis (strain ATCC BAA-2496 / DSM 23469 / PBi) (Borreliella bavariensis).